A 156-amino-acid polypeptide reads, in one-letter code: ATP synthase subunit b 2 (156 aa).

Residues 7-29 traverse the membrane as a helical segment; that stretch reads LLGQAISFAIFVWFCMKYVWPPV.

This sequence belongs to the ATPase B chain family. In terms of assembly, F-type ATPases have 2 components, F(1) - the catalytic core - and F(0) - the membrane proton channel. F(1) has five subunits: alpha(3), beta(3), gamma(1), delta(1), epsilon(1). F(0) has three main subunits: a(1), b(2) and c(10-14). The alpha and beta chains form an alternating ring which encloses part of the gamma chain. F(1) is attached to F(0) by a central stalk formed by the gamma and epsilon chains, while a peripheral stalk is formed by the delta and b chains.

The protein localises to the cell inner membrane. F(1)F(0) ATP synthase produces ATP from ADP in the presence of a proton or sodium gradient. F-type ATPases consist of two structural domains, F(1) containing the extramembraneous catalytic core and F(0) containing the membrane proton channel, linked together by a central stalk and a peripheral stalk. During catalysis, ATP synthesis in the catalytic domain of F(1) is coupled via a rotary mechanism of the central stalk subunits to proton translocation. Its function is as follows. Component of the F(0) channel, it forms part of the peripheral stalk, linking F(1) to F(0). The chain is ATP synthase subunit b 2 from Marinomonas sp. (strain MWYL1).